The primary structure comprises 1172 residues: Ras guanine nucleotide exchange factor W (1172 aa).

Low complexity-rich tracts occupy residues 34–70 and 78–87; these read PIYT…LNNL and NSNSVNNTIS. 3 disordered regions span residues 34-100, 138-162, and 186-246; these read PIYT…RSNT, KFLD…RIQQ, and FKRS…EIKD. A compositionally biased stretch (low complexity) spans 194-241; the sequence is QPPQSQSQQQQQLQLQQQQQQSMPNLSLGNNINSNNNNNNGSENNDIS. Helical transmembrane passes span 286–306, 320–340, 347–367, 378–400, 432–452, and 545–565; these read IWLT…DIIG, IMAV…LNLF, FPGT…VTDI, VLSI…ISLI, LTTN…QLLV, and ILHL…NLLI. Residues 666–702 adopt a coiled-coil conformation; that stretch reads LLGMLNEIDDSLQAAKEKVEEESIQNSILKKDIEDLY. Residues 765–903 enclose the N-terminal Ras-GEF domain; sequence DLNVIQYATI…YIDSIHKRKM (139 aa). The Ras-GEF domain maps to 938 to 1170; it reads DISDIAIQIT…WKMSLSCEQR (233 aa).

The protein resides in the membrane. Its function is as follows. Promotes the exchange of Ras-bound GDP by GTP. The sequence is that of Ras guanine nucleotide exchange factor W (gefW) from Dictyostelium discoideum (Social amoeba).